A 551-amino-acid polypeptide reads, in one-letter code: HTH-type transcriptional regulator SgrR (551 aa).

The HTH marR-type domain occupies Met1–Arg116. The segment at residues Leu26–Asp49 is a DNA-binding region (H-T-H motif). Residues Glu163–Trp492 are solute-binding.

In terms of biological role, activates the small RNA gene sgrS under glucose-phosphate stress conditions as well as yfdZ. Represses its own transcription under both stress and non-stress conditions; this repression likely provides one measure of control over sgrR at the level of synthesis. Might act as a sensor of the intracellular accumulation of phosphoglucose by binding these molecules in its C-terminal solute-binding domain. The chain is HTH-type transcriptional regulator SgrR (sgrR) from Escherichia coli (strain K12).